A 145-amino-acid chain; its full sequence is UPF0735 ACT domain-containing protein CLH_2637 (145 aa).

In terms of domain architecture, ACT spans 69-144 (TFNLIVKDQT…YVEKIEFVAM (76 aa)).

It belongs to the UPF0735 family.

The protein is UPF0735 ACT domain-containing protein CLH_2637 of Clostridium botulinum (strain Alaska E43 / Type E3).